The sequence spans 726 residues: Biotin--protein ligase (726 aa).

The tract at residues 28-98 is disordered; it reads EVKDQVSNKQ…SDRGGGPVEH (71 aa). The span at 43–75 shows a compositional bias: basic and acidic residues; that stretch reads PKPEPSLEIKPEQDGMEHVGRDDPKALGEEPKQ. Residues Ser-147 and Ser-299 each carry the phosphoserine modification. One can recognise a BPL/LPL catalytic domain in the interval 463–652; sequence KQLGKVILFA…VLEKLIKEFQ (190 aa).

Belongs to the biotin--protein ligase family. In terms of assembly, monomer. In terms of tissue distribution, widely expressed. Mostly expressed in muscle, placenta and to a lower extent in the brain, kidney, pancreas, liver and lung.

The protein localises to the cytoplasm. It is found in the mitochondrion. The catalysed reaction is apo-[methylmalonyl-CoA:pyruvate carboxytransferase] + biotin + ATP = holo-[methylmalonyl-CoA:pyruvate carboxytransferase] + AMP + diphosphate + H(+). It carries out the reaction apo-[propionyl-CoA:carbon-dioxide ligase (ADP-forming)] + biotin + ATP = holo-[propionyl-CoA:carbon-dioxide ligase (ADP-forming)] + AMP + diphosphate + H(+). It catalyses the reaction apo-[3-methylcrotonoyl-CoA:carbon-dioxide ligase (ADP-forming)] + biotin + ATP = holo-[3-methylcrotonoyl-CoA:carbon-dioxide ligase (ADP-forming)] + AMP + diphosphate + H(+). The enzyme catalyses biotin + L-lysyl-[protein] + ATP = N(6)-biotinyl-L-lysyl-[protein] + AMP + diphosphate + H(+). Functionally, biotin--protein ligase catalyzing the biotinylation of the 4 biotin-dependent carboxylases acetyl-CoA-carboxylase, pyruvate carboxylase, propionyl-CoA carboxylase, and methylcrotonyl-CoA carboxylase. This Homo sapiens (Human) protein is Biotin--protein ligase.